The following is a 446-amino-acid chain: N-succinylarginine dihydrolase (446 aa).

Substrate is bound by residues 19–28 (AGLSFGNVAS), N110, and 137–138 (HR). E174 is a catalytic residue. R213 lines the substrate pocket. The active site involves H249. Residues D251 and N364 each coordinate substrate. The active-site Nucleophile is C370.

It belongs to the succinylarginine dihydrolase family. Homodimer.

The catalysed reaction is N(2)-succinyl-L-arginine + 2 H2O + 2 H(+) = N(2)-succinyl-L-ornithine + 2 NH4(+) + CO2. It participates in amino-acid degradation; L-arginine degradation via AST pathway; L-glutamate and succinate from L-arginine: step 2/5. Functionally, catalyzes the hydrolysis of N(2)-succinylarginine into N(2)-succinylornithine, ammonia and CO(2). In Burkholderia mallei (strain NCTC 10247), this protein is N-succinylarginine dihydrolase.